An 84-amino-acid chain; its full sequence is MPQIKSAMKRVKTIEKANNRNASQLSTMRSAIKKFKAAQAAGNEEAADLLKAATRAIDMASTKGLIHANKAGRDKSRLNKMMAK.

This sequence belongs to the bacterial ribosomal protein bS20 family.

In terms of biological role, binds directly to 16S ribosomal RNA. In Latilactobacillus sakei subsp. sakei (strain 23K) (Lactobacillus sakei subsp. sakei), this protein is Small ribosomal subunit protein bS20.